The primary structure comprises 424 residues: Argininosuccinate synthase (424 aa).

Residues 9-17 (AYSGGLDTS) and alanine 35 each bind ATP. L-citrulline-binding residues include tyrosine 86 and serine 91. Residue 114–122 (SHGATGKGN) coordinates ATP. L-aspartate is bound by residues threonine 118, asparagine 122, and aspartate 123. Residue asparagine 122 participates in L-citrulline binding. Arginine 126, serine 179, serine 188, glutamate 269, and tyrosine 281 together coordinate L-citrulline.

Belongs to the argininosuccinate synthase family. As to quaternary structure, homotetramer.

It catalyses the reaction L-citrulline + L-aspartate + ATP = 2-(N(omega)-L-arginino)succinate + AMP + diphosphate + H(+). It participates in amino-acid biosynthesis; L-arginine biosynthesis; L-arginine from L-ornithine and carbamoyl phosphate: step 2/3. The protein operates within nitrogen metabolism; urea cycle; (N(omega)-L-arginino)succinate from L-aspartate and L-citrulline: step 1/1. The protein is Argininosuccinate synthase of Anopheles gambiae (African malaria mosquito).